Here is a 67-residue protein sequence, read N- to C-terminus: Ranatuerin-2Vb (67 aa).

Residues 1–22 (MFTLKKSFLLLFFLGTITLSLC) form the signal peptide. Residues 23 to 39 (EEERGADDDDGEEEVKR) constitute a propeptide that is removed on maturation. A disulfide bridge connects residues Cys62 and Cys67.

Expressed by the skin glands.

It localises to the secreted. Functionally, antimicrobial peptide. The polypeptide is Ranatuerin-2Vb (Odorrana versabilis (Chinese bamboo leaf odorous frog)).